Consider the following 384-residue polypeptide: MKKNAVHFGAGNIGRGFIGKLLADADIAVTFADVNEPLVDQLSHQQEYKVKVVGSECKMETVSHVTAVNSASEALIERIIKTDLVTTAVGPTVLDIIAKTIAKGLSARFAAGNTQPLNIIACENMVRGTTHLKQQVYQFLTTEEQQQADALVGFVDSAVDRIVPPLQAANDDPLEVTVESFSEWIVDEQQFKGEIPQIEGMEKTDNLMAFVERKLFTLNTGHCVTAYLGCLKGHRTIREAIEDPCIHAQVKQAMQESGEVLIRRYGFDRALHSAYIEKILSRFANPYLVDEVDRVGRQPLRKLSANDRLIKPLLGTIEYGLPNGMLLKGIAAALKYRNSSDPQAVELQQSIEKEGVRSTLARYTGLAAESVEAQQIEALYQQMD.

5 to 16 (AVHFGAGNIGRG) serves as a coordination point for NAD(+).

It belongs to the mannitol dehydrogenase family.

The enzyme catalyses D-mannitol 1-phosphate + NAD(+) = beta-D-fructose 6-phosphate + NADH + H(+). The polypeptide is Mannitol-1-phosphate 5-dehydrogenase (Vibrio cholerae serotype O1 (strain ATCC 39541 / Classical Ogawa 395 / O395)).